A 309-amino-acid chain; its full sequence is Type II methyltransferase M.HindIII (309 aa).

Belongs to the N(4)/N(6)-methyltransferase family.

The catalysed reaction is a 2'-deoxyadenosine in DNA + S-adenosyl-L-methionine = an N(6)-methyl-2'-deoxyadenosine in DNA + S-adenosyl-L-homocysteine + H(+). Functionally, a beta subtype methylase that recognizes the double-stranded sequence 5'-AAGCTT-3', methylates A-1 on both strands, and protects the DNA from cleavage by the HindIII endonuclease. The protein is Type II methyltransferase M.HindIII of Haemophilus influenzae (strain ATCC 51907 / DSM 11121 / KW20 / Rd).